The sequence spans 131 residues: Profilin-7 (131 aa).

Residues cysteine 13 and cysteine 115 are joined by a disulfide bond. The Involved in PIP2 interaction motif lies at 81–97 (AVIRGKKGSGGITVKKT). Threonine 111 is subject to Phosphothreonine.

The protein belongs to the profilin family. As to quaternary structure, occurs in many kinds of cells as a complex with monomeric actin in a 1:1 ratio. In terms of processing, phosphorylated by MAP kinases.

The protein localises to the cytoplasm. The protein resides in the cytoskeleton. Functionally, binds to actin and affects the structure of the cytoskeleton. At high concentrations, profilin prevents the polymerization of actin, whereas it enhances it at low concentrations. This Zea mays (Maize) protein is Profilin-7.